A 452-amino-acid polypeptide reads, in one-letter code: Pentatricopeptide repeat-containing protein At2g30780 (452 aa).

7 PPR repeats span residues 137–171 (TASVYNSLMSVYMWNGLAEECQSLFKDFRRQTHCA), 173–207 (TVVTYNILVSVYGRLLMVKNMEAAFEELQKVKLPP), 208–242 (NSVTYNFLIAGYMTAWNWDKMEATFQEMKRGPVEP), 243–273 (DTDTYQLMLRGYANSGNLNRMEEMYEVIKDQ), 350–384 (KSSIMRAIIAAYFRCNEVDNLANFVKRAESAGWKL), 385–419 (CRSLYHCKIMMYGSQKRFEEMEGVVNEMAETNYGL), and 420–452 (VTKTFAIMIKAYKNHGMESDAEKVKGKMLKRGL).

It belongs to the PPR family. P subfamily.

In Arabidopsis thaliana (Mouse-ear cress), this protein is Pentatricopeptide repeat-containing protein At2g30780.